The following is a 350-amino-acid chain: Probable 2-dehydropantoate 2-reductase (350 aa).

NADP(+) is bound by residues 9–14 and asparagine 115; that span reads GAGSIG. A substrate-binding site is contributed by asparagine 115. Catalysis depends on lysine 213, which acts as the Proton donor. 3 residues coordinate substrate: asparagine 217, asparagine 221, and serine 295. NADP(+) is bound at residue glutamate 307.

It belongs to the ketopantoate reductase family.

The enzyme catalyses (R)-pantoate + NADP(+) = 2-dehydropantoate + NADPH + H(+). It functions in the pathway cofactor biosynthesis; (R)-pantothenate biosynthesis; (R)-pantoate from 3-methyl-2-oxobutanoate: step 2/2. Functionally, catalyzes the NADPH-dependent reduction of ketopantoate into pantoic acid. This Schizosaccharomyces pombe (strain 972 / ATCC 24843) (Fission yeast) protein is Probable 2-dehydropantoate 2-reductase.